We begin with the raw amino-acid sequence, 377 residues long: Cytochrome b (377 aa).

The next 4 helical transmembrane spans lie at 36-56 (WGSLLGIFLIIPIITGLFLAM), 80-102 (WLIRFIHVNGASFFFIFLYLHMA), 115-135 (VWLIGCTIYVVSMATAFMGYI), and 181-201 (FFVLHFILPFIILALSIIHLI). Residues H86 and H100 each coordinate heme b. 2 residues coordinate heme b: H185 and H199. H204 contributes to the a ubiquinone binding site. Helical transmembrane passes span 227-247 (YSSKDLMFLLLLMMIMMVIIF), 291-311 (LGGVLTMVFSILILFLLPFIS), 326-346 (LFWSFVVNMLILTWIGGMPVV), and 354-374 (LTSTFLYFIIILIYSNSFLMI).

The protein belongs to the cytochrome b family. As to quaternary structure, the main subunits of complex b-c1 are: cytochrome b, cytochrome c1 and the Rieske protein. Requires heme b as cofactor.

Its subcellular location is the mitochondrion inner membrane. Its function is as follows. Component of the ubiquinol-cytochrome c reductase complex (complex III or cytochrome b-c1 complex) that is part of the mitochondrial respiratory chain. The b-c1 complex mediates electron transfer from ubiquinol to cytochrome c. Contributes to the generation of a proton gradient across the mitochondrial membrane that is then used for ATP synthesis. This is Cytochrome b (mt:Cyt-b) from Myzostoma seymourcollegiorum (Polychaete worm).